A 517-amino-acid chain; its full sequence is Alpha-amylase (517 aa).

The first 21 residues, 1-21 (MAHLLLAVVAITLALSQSVFG), serve as a signal peptide directing secretion. A disulfide bridge links C52 with C108. Ca(2+) contacts are provided by N122, R178, and D187. A chloride-binding site is contributed by R215. D217 acts as the Nucleophile in catalysis. Ca(2+) is bound at residue H221. E253 serves as the catalytic Proton donor. R355 contacts chloride. 2 disulfides stabilise this stretch: C397–C403 and C470–C482.

Belongs to the glycosyl hydrolase 13 family. Monomer. It depends on Ca(2+) as a cofactor. Chloride is required as a cofactor.

Its subcellular location is the secreted. The enzyme catalyses Endohydrolysis of (1-&gt;4)-alpha-D-glucosidic linkages in polysaccharides containing three or more (1-&gt;4)-alpha-linked D-glucose units.. Its activity is regulated as follows. Activated by chloride ions. Inhibited by acarbose. Not inhibited by wheat alpha-amylase inhibitors 1 (WI-1, the tetrameric form) or 3 (WI-3, the monomeric form) and bean alpha-amylase inhibitor 1 (alphaAI-1). This Acarus siro (Flour mite) protein is Alpha-amylase.